Here is a 452-residue protein sequence, read N- to C-terminus: Gamma conglutin 1 (452 aa).

A signal peptide spans 1 to 33 (MAKNMAPILHILVISLSYSFLFVTSSSQNSQSL). Residues 61 to 432 (HWGNILKRTP…DLARSRVGFN (372 aa)) enclose the Peptidase A1 domain. Intrachain disulfides connect C89/C179, C103/C116, C108/C134, C119/C129, and C353/C394. Residue N131 is glycosylated (N-linked (GlcNAc...) asparagine).

It belongs to the peptidase A1 family. In terms of assembly, two-subunit monomeric unit made of alpha and beta subunits coupled by disulfide bonds (at pH 4.5 and under non-reducing conditions). Monomeric alpha and beta subunits in reducing conditions. Can also form oligomers including dimer, tetramer and cyclic hexamer (trimer of dimers) (at pH &gt; 5.5). Component of globulins complexes which accumulate in seeds. Interacts with flavonoids (e.g. apigenin glucosides) present in globulins complexes. Glycosylated on alpha chain at Asn-131; identified N-glycans bound are Man(2)(Xyl)(Fuc)GlcNAc(2), Man(3)(Xyl)(Fuc)GlcNAc(2), GlcNAcMan(3)(Xyl)(Fuc)GlcNAc(2) and GlcNAc(2)Man(3)(Xyl)(Fuc)GlcNAc(2). Expressed in developing seeds and in the young roots and cotyledons of germinating seeds and young seedlings.

The protein resides in the secreted. The protein localises to the extracellular space. Sulfur-rich seed storage protein that remains undegraded at germination. The uncleaved form exhibits some inhibitory activity against GH11 xylanase from T.longibrachiatum, more at pH 7 than at pH 5.3, but not against GH12 xyloglucan-specific endoglucanase (XEG) from A.aculeatus. Binds to model phospholipid membranes containing dimyristoyl phosphatidylglycerol (DMPG), dioleoyl phosphatidic acid (DOPA) or mixture of dimyristoyl phosphatidylcholine and dimyristoyl phosphatidylglycerol (DMPC:DMPG), or mixture of dioleoyl phosphatidic acid and dioleoyl phosphatidylcholine (DOPC:DOPA). The sequence is that of Gamma conglutin 1 from Lupinus albus (White lupine).